The sequence spans 127 residues: Fluoride-specific ion channel FluC (127 aa).

Transmembrane regions (helical) follow at residues 7–27 (LILI…MGLI), 37–57 (FGTL…MAMI), 69–89 (LFMI…SAEV), and 102–122 (LGIM…GVLI). Na(+)-binding residues include Gly77 and Thr80.

Belongs to the fluoride channel Fluc/FEX (TC 1.A.43) family.

The protein resides in the cell inner membrane. It catalyses the reaction fluoride(in) = fluoride(out). Na(+) is not transported, but it plays an essential structural role and its presence is essential for fluoride channel function. Functionally, fluoride-specific ion channel. Important for reducing fluoride concentration in the cell, thus reducing its toxicity. The sequence is that of Fluoride-specific ion channel FluC from Mannheimia succiniciproducens (strain KCTC 0769BP / MBEL55E).